Consider the following 336-residue polypeptide: Sex determination protein tasselseed-2 (336 aa).

An NAD(+)-binding site is contributed by isoleucine 59 to valine 83. Serine 194 lines the substrate pocket. Residue tyrosine 207 is the Proton acceptor of the active site.

It belongs to the short-chain dehydrogenases/reductases (SDR) family.

Its function is as follows. Required for stage-specific floral organ abortion. The chain is Sex determination protein tasselseed-2 (TS2) from Zea mays (Maize).